A 420-amino-acid polypeptide reads, in one-letter code: Ammonia monooxygenase beta subunit (420 aa).

An N-terminal signal peptide occupies residues 1-25; sequence MGIKNLYKRGVMGLYGVAYAVAALA. Histidine 38, histidine 142, and histidine 144 together coordinate Cu cation. 2 helical membrane passes run 193 to 213 and 240 to 260; these read GIFWHVVWMSIGIFWIGVFTA and ITWVLAILTLALVWGGYRYTE.

As to quaternary structure, the soluble ammonia monooxygenase is a nonamer composed of three alpha subunits (AmoA), three beta subunits (AmoB) and three gamma subunits (Cytochrome c1 PetC). Cu(2+) is required as a cofactor.

The protein resides in the cell membrane. The protein localises to the cytoplasm. The catalysed reaction is AH2 + NH4(+) + O2 = hydroxylamine + A + H2O + H(+). In vitro, inhibited by acetylene. Its function is as follows. Part of the ammonia monooxygenase complex, which catalyzes the oxidation of ammonia to hydroxylamine, the first reaction in the process of ammonia oxidation to nitrite. The polypeptide is Ammonia monooxygenase beta subunit (Nitrosomonas europaea (strain ATCC 19718 / CIP 103999 / KCTC 2705 / NBRC 14298)).